The sequence spans 279 residues: Very long chain fatty acid elongase 1 (279 aa).

M1 carries the N-acetylmethionine modification. Transmembrane regions (helical) follow at residues 23-43, 61-81, 110-130, 137-154, 176-196, 201-221, and 231-251; these read PLMG…YFVL, FMIV…YEFL, VAWL…IFIL, VTFL…SWWW, VIMY…PYLW, MTAI…QYYF, and VIIH…SNFW. A Di-lysine motif motif is present at residues 275–279; it reads KVKAN.

It belongs to the ELO family. ELOVL1 subfamily. In terms of assembly, interacts with LASS2 and HSD17B12. Interacts with TECR. As to expression, ubiquitous.

The protein localises to the endoplasmic reticulum membrane. The catalysed reaction is a very-long-chain acyl-CoA + malonyl-CoA + H(+) = a very-long-chain 3-oxoacyl-CoA + CO2 + CoA. It carries out the reaction eicosanoyl-CoA + malonyl-CoA + H(+) = 3-oxodocosanoyl-CoA + CO2 + CoA. The enzyme catalyses (11Z)-eicosenoyl-CoA + malonyl-CoA + H(+) = 3-oxo-(13Z)-docosenoyl-CoA + CO2 + CoA. It catalyses the reaction docosanoyl-CoA + malonyl-CoA + H(+) = 3-oxotetracosanoyl-CoA + CO2 + CoA. The catalysed reaction is (13Z)-docosenoyl-CoA + malonyl-CoA + H(+) = 3-oxo-(15Z)-tetracosenoyl-CoA + CO2 + CoA. It carries out the reaction tetracosanoyl-CoA + malonyl-CoA + H(+) = 3-oxohexacosanoyl-CoA + CO2 + CoA. The enzyme catalyses hexacosanoyl-CoA + malonyl-CoA + H(+) = 3-oxooctacosanyol-CoA + CO2 + CoA. It catalyses the reaction octadecanoyl-CoA + malonyl-CoA + H(+) = 3-oxoeicosanoyl-CoA + CO2 + CoA. It functions in the pathway lipid metabolism; fatty acid biosynthesis. Catalyzes the first and rate-limiting reaction of the four reactions that constitute the long-chain fatty acids elongation cycle. This endoplasmic reticulum-bound enzymatic process allows the addition of 2 carbons to the chain of long- and very long-chain fatty acids (VLCFAs) per cycle. Condensing enzyme that exhibits activity toward saturated and monounsaturated acyl-CoA substrates, with the highest activity towards C22:0 acyl-CoA. May participate in the production of both saturated and monounsaturated VLCFAs of different chain lengths that are involved in multiple biological processes as precursors of membrane lipids and lipid mediators. Important for saturated C24:0 and monounsaturated C24:1 sphingolipid synthesis. Indirectly inhibits RPE65 via production of VLCFAs. In Homo sapiens (Human), this protein is Very long chain fatty acid elongase 1.